A 235-amino-acid polypeptide reads, in one-letter code: Serine protease SplA (235 aa).

A signal peptide spans 1 to 35 (MNKNVMVKGLTALTILTSLGFAENISNQPHSIAKA). Residues histidine 74, aspartate 113, and serine 189 each act as charge relay system in the active site.

This sequence belongs to the peptidase S1B family.

Its subcellular location is the secreted. The polypeptide is Serine protease SplA (splA) (Staphylococcus aureus (strain USA300)).